Reading from the N-terminus, the 172-residue chain is uncharacterized protein (172 aa).

Belongs to the baculoviridae 19 kDa protein family.

This is an uncharacterized protein from Orgyia pseudotsugata multicapsid polyhedrosis virus (OpMNPV).